A 31-amino-acid polypeptide reads, in one-letter code: Cytochrome b6-f complex subunit 6 (31 aa).

A helical membrane pass occupies residues 4-24 (VISYFGFLLVALAFTLVTYLG).

It belongs to the PetL family. The 4 large subunits of the cytochrome b6-f complex are cytochrome b6, subunit IV (17 kDa polypeptide, PetD), cytochrome f and the Rieske protein, while the 4 small subunits are PetG, PetL, PetM and PetN. The complex functions as a dimer.

Its subcellular location is the plastid. The protein localises to the chloroplast thylakoid membrane. In terms of biological role, component of the cytochrome b6-f complex, which mediates electron transfer between photosystem II (PSII) and photosystem I (PSI), cyclic electron flow around PSI, and state transitions. PetL is important for photoautotrophic growth as well as for electron transfer efficiency and stability of the cytochrome b6-f complex. This is Cytochrome b6-f complex subunit 6 from Nephroselmis olivacea (Green alga).